Consider the following 132-residue polypeptide: Small ribosomal subunit protein uS8 (132 aa).

This sequence belongs to the universal ribosomal protein uS8 family. As to quaternary structure, part of the 30S ribosomal subunit. Contacts proteins S5 and S12.

Its function is as follows. One of the primary rRNA binding proteins, it binds directly to 16S rRNA central domain where it helps coordinate assembly of the platform of the 30S subunit. This Cereibacter sphaeroides (strain ATCC 17025 / ATH 2.4.3) (Rhodobacter sphaeroides) protein is Small ribosomal subunit protein uS8.